We begin with the raw amino-acid sequence, 152 residues long: 1,4-dihydroxy-2-naphthoyl-CoA hydrolase (152 aa).

D20 is a catalytic residue.

This sequence belongs to the 4-hydroxybenzoyl-CoA thioesterase family. DHNA-CoA hydrolase subfamily.

The enzyme catalyses 1,4-dihydroxy-2-naphthoyl-CoA + H2O = 1,4-dihydroxy-2-naphthoate + CoA + H(+). It participates in cofactor biosynthesis; phylloquinone biosynthesis. It functions in the pathway quinol/quinone metabolism; 1,4-dihydroxy-2-naphthoate biosynthesis; 1,4-dihydroxy-2-naphthoate from chorismate: step 7/7. Catalyzes the hydrolysis of 1,4-dihydroxy-2-naphthoyl-CoA (DHNA-CoA) to 1,4-dihydroxy-2-naphthoate (DHNA), a reaction involved in phylloquinone (vitamin K1) biosynthesis. The protein is 1,4-dihydroxy-2-naphthoyl-CoA hydrolase of Parasynechococcus marenigrum (strain WH8102).